We begin with the raw amino-acid sequence, 258 residues long: Histidine/lysine/arginine/ornithine transport ATP-binding protein HisP (258 aa).

An ABC transporter domain is found at 7 to 253 (LHVIDLHKRY…PQSPRLQQFL (247 aa)). Residues Ser-41, Gly-42, Gly-44, Lys-45, Ser-46, and Thr-47 each coordinate ATP.

The protein belongs to the ABC transporter superfamily. In terms of assembly, the HisPMQJ complex is composed of two ATP-binding proteins (HisP), two transmembrane proteins (HisM and HisQ) and a solute-binding protein (HisJ). The HisPMQ-ArgT complex is composed of two ATP-binding proteins (HisP), two transmembrane proteins (HisM and HisQ) and a solute-binding protein (ArgT).

It is found in the cell inner membrane. The enzyme catalyses a polar amino acid(out) + ATP + H2O = a polar amino acid(in) + ADP + phosphate + H(+). It carries out the reaction L-histidine(out) + ATP + H2O = L-histidine(in) + ADP + phosphate + H(+). It catalyses the reaction L-lysine(out) + ATP + H2O = L-lysine(in) + ADP + phosphate + H(+). The catalysed reaction is L-arginine(out) + ATP + H2O = L-arginine(in) + ADP + phosphate + H(+). The enzyme catalyses L-ornithine(out) + ATP + H2O = L-ornithine(in) + ADP + phosphate + H(+). Its activity is regulated as follows. Isolated, soluble HisP has a very low ATPase activity. ATPase activity is slightly increased in the presence of HisM and HisQ, and strongly increased when HisJ is also present. Its function is as follows. Part of the ABC transporter complex HisPMQJ involved in histidine transport. Is also part of the ABC transporter complex HisPMQ-ArgT involved in lysine/arginine/ornithine transport. Shows ATPase activity. Responsible for energy coupling to the transport system. This is Histidine/lysine/arginine/ornithine transport ATP-binding protein HisP from Salmonella typhimurium (strain LT2 / SGSC1412 / ATCC 700720).